The primary structure comprises 98 residues: UPF0390 protein zgc136864 (98 aa).

Residues 1–30 show a composition bias toward basic residues; sequence MAQGKQKFKAQRPGGAKKHQNKPKGLKKGG. Disordered stretches follow at residues 1-38 and 63-98; these read MAQGKQKFKAQRPGGAKKHQNKPKGLKKGGRIIAPKKA and TQKASTSLHKKLSVLKTPAQKSGTAGAPKPAAGPSK. A compositionally biased stretch (low complexity) spans 83–98; it reads KSGTAGAPKPAAGPSK.

It belongs to the UPF0390 family.

This chain is UPF0390 protein zgc136864, found in Danio rerio (Zebrafish).